Consider the following 135-residue polypeptide: uncharacterized protein (135 aa).

4 helical membrane-spanning segments follow: residues 7–25 (WSAA…EWTI), 29–51 (ILLT…TGNI), 64–85 (VFIF…EVGI), and 89–108 (ALIF…ISIF).

It belongs to the bacteriophage holin family. Cp-1 holin subfamily.

It is found in the cell membrane. This is an uncharacterized protein from Halalkalibacterium halodurans (strain ATCC BAA-125 / DSM 18197 / FERM 7344 / JCM 9153 / C-125) (Bacillus halodurans).